The following is a 1413-amino-acid chain: DNA-directed RNA polymerase subunit beta' (1413 aa).

Residues Cys70, Cys72, Cys85, and Cys88 each coordinate Zn(2+). Asp461, Asp463, and Asp465 together coordinate Mg(2+). Zn(2+)-binding residues include Cys820, Cys894, Cys901, and Cys904.

Belongs to the RNA polymerase beta' chain family. In terms of assembly, the RNAP catalytic core consists of 2 alpha, 1 beta, 1 beta' and 1 omega subunit. When a sigma factor is associated with the core the holoenzyme is formed, which can initiate transcription. Mg(2+) serves as cofactor. Requires Zn(2+) as cofactor.

The enzyme catalyses RNA(n) + a ribonucleoside 5'-triphosphate = RNA(n+1) + diphosphate. Functionally, DNA-dependent RNA polymerase catalyzes the transcription of DNA into RNA using the four ribonucleoside triphosphates as substrates. The protein is DNA-directed RNA polymerase subunit beta' of Cupriavidus metallidurans (strain ATCC 43123 / DSM 2839 / NBRC 102507 / CH34) (Ralstonia metallidurans).